Consider the following 234-residue polypeptide: Large ribosomal subunit protein uL1 (234 aa).

Belongs to the universal ribosomal protein uL1 family. As to quaternary structure, part of the 50S ribosomal subunit.

Binds directly to 23S rRNA. The L1 stalk is quite mobile in the ribosome, and is involved in E site tRNA release. In terms of biological role, protein L1 is also a translational repressor protein, it controls the translation of the L11 operon by binding to its mRNA. The polypeptide is Large ribosomal subunit protein uL1 (Helicobacter acinonychis (strain Sheeba)).